The following is a 197-amino-acid chain: Imidazoleglycerol-phosphate dehydratase (197 aa).

It belongs to the imidazoleglycerol-phosphate dehydratase family.

It localises to the cytoplasm. It carries out the reaction D-erythro-1-(imidazol-4-yl)glycerol 3-phosphate = 3-(imidazol-4-yl)-2-oxopropyl phosphate + H2O. Its pathway is amino-acid biosynthesis; L-histidine biosynthesis; L-histidine from 5-phospho-alpha-D-ribose 1-diphosphate: step 6/9. This is Imidazoleglycerol-phosphate dehydratase from Chromobacterium violaceum (strain ATCC 12472 / DSM 30191 / JCM 1249 / CCUG 213 / NBRC 12614 / NCIMB 9131 / NCTC 9757 / MK).